Reading from the N-terminus, the 291-residue chain is Probable S-adenosylmethionine-dependent methyltransferase CRG1 (291 aa).

The protein belongs to the methyltransferase superfamily.

The protein resides in the cytoplasm. Its function is as follows. Probable S-adenosylmethionine-dependent methyltransferase which mediates cantharidin resistance. The chain is Probable S-adenosylmethionine-dependent methyltransferase CRG1 (CRG1) from Saccharomyces cerevisiae (strain ATCC 204508 / S288c) (Baker's yeast).